The chain runs to 216 residues: Maleylacetoacetate isomerase (216 aa).

Residue Met-1 is modified to N-acetylmethionine. The 84-residue stretch at 4–87 (GKPVLYSYFR…YLEETRPIPR (84 aa)) folds into the GST N-terminal domain. Glutathione is bound by residues 14–19 (SSCSWR) and Gln-45. Lys-57 carries the post-translational modification N6-succinyllysine. Glutathione contacts are provided by residues Val-59, 71–72 (QS), Gln-111, and 115–117 (NLS). The 121-residue stretch at 92-212 (DPQKRAIVRM…HPCRQPDTPA (121 aa)) folds into the GST C-terminal domain. Thr-136 is modified (phosphothreonine). Phosphoserine is present on Ser-137. Lys-177 bears the N6-succinyllysine mark. Ser-181 is subject to Phosphoserine.

Belongs to the GST superfamily. Zeta family. As to quaternary structure, homodimer. Glutathione is required as a cofactor. The N-terminus is blocked.

Its subcellular location is the cytoplasm. The enzyme catalyses 4-maleylacetoacetate = 4-fumarylacetoacetate. It carries out the reaction RX + glutathione = an S-substituted glutathione + a halide anion + H(+). The protein operates within amino-acid degradation; L-phenylalanine degradation; acetoacetate and fumarate from L-phenylalanine: step 5/6. In terms of biological role, probable bifunctional enzyme showing minimal glutathione-conjugating activity with ethacrynic acid and 7-chloro-4-nitrobenz-2-oxa-1, 3-diazole and maleylacetoacetate isomerase activity. Also has low glutathione peroxidase activity with t-butyl and cumene hydroperoxides. Is able to catalyze the glutathione dependent oxygenation of dichloroacetic acid to glyoxylic acid. In Rattus norvegicus (Rat), this protein is Maleylacetoacetate isomerase (Gstz1).